The chain runs to 687 residues: Glycine--tRNA ligase beta subunit (687 aa).

This sequence belongs to the class-II aminoacyl-tRNA synthetase family. Tetramer of two alpha and two beta subunits.

It localises to the cytoplasm. It catalyses the reaction tRNA(Gly) + glycine + ATP = glycyl-tRNA(Gly) + AMP + diphosphate. In Citrifermentans bemidjiense (strain ATCC BAA-1014 / DSM 16622 / JCM 12645 / Bem) (Geobacter bemidjiensis), this protein is Glycine--tRNA ligase beta subunit.